A 292-amino-acid polypeptide reads, in one-letter code: Ribosomal protein L11 methyltransferase (292 aa).

Residues T144, G165, D187, and N229 each coordinate S-adenosyl-L-methionine.

This sequence belongs to the methyltransferase superfamily. PrmA family.

It is found in the cytoplasm. It carries out the reaction L-lysyl-[protein] + 3 S-adenosyl-L-methionine = N(6),N(6),N(6)-trimethyl-L-lysyl-[protein] + 3 S-adenosyl-L-homocysteine + 3 H(+). In terms of biological role, methylates ribosomal protein L11. This Pseudomonas putida (strain ATCC 700007 / DSM 6899 / JCM 31910 / BCRC 17059 / LMG 24140 / F1) protein is Ribosomal protein L11 methyltransferase.